The sequence spans 90 residues: Probable Fe(2+)-trafficking protein (90 aa).

This sequence belongs to the Fe(2+)-trafficking protein family.

Could be a mediator in iron transactions between iron acquisition and iron-requiring processes, such as synthesis and/or repair of Fe-S clusters in biosynthetic enzymes. This chain is Probable Fe(2+)-trafficking protein, found in Hydrogenovibrio crunogenus (strain DSM 25203 / XCL-2) (Thiomicrospira crunogena).